The following is a 156-amino-acid chain: ATP synthase subunit b (156 aa).

The helical transmembrane segment at 7 to 26 (LIGQAIWFALFIWITMKYVW) threads the bilayer.

This sequence belongs to the ATPase B chain family. As to quaternary structure, F-type ATPases have 2 components, F(1) - the catalytic core - and F(0) - the membrane proton channel. F(1) has five subunits: alpha(3), beta(3), gamma(1), delta(1), epsilon(1). F(0) has three main subunits: a(1), b(2) and c(10-14). The alpha and beta chains form an alternating ring which encloses part of the gamma chain. F(1) is attached to F(0) by a central stalk formed by the gamma and epsilon chains, while a peripheral stalk is formed by the delta and b chains.

The protein localises to the cell inner membrane. In terms of biological role, f(1)F(0) ATP synthase produces ATP from ADP in the presence of a proton or sodium gradient. F-type ATPases consist of two structural domains, F(1) containing the extramembraneous catalytic core and F(0) containing the membrane proton channel, linked together by a central stalk and a peripheral stalk. During catalysis, ATP synthesis in the catalytic domain of F(1) is coupled via a rotary mechanism of the central stalk subunits to proton translocation. Its function is as follows. Component of the F(0) channel, it forms part of the peripheral stalk, linking F(1) to F(0). This is ATP synthase subunit b from Dechloromonas aromatica (strain RCB).